Reading from the N-terminus, the 142-residue chain is Large ribosomal subunit protein uL11 (142 aa).

This sequence belongs to the universal ribosomal protein uL11 family. As to quaternary structure, part of the ribosomal stalk of the 50S ribosomal subunit. Interacts with L10 and the large rRNA to form the base of the stalk. L10 forms an elongated spine to which L12 dimers bind in a sequential fashion forming a multimeric L10(L12)X complex. In terms of processing, one or more lysine residues are methylated.

In terms of biological role, forms part of the ribosomal stalk which helps the ribosome interact with GTP-bound translation factors. The sequence is that of Large ribosomal subunit protein uL11 from Mycobacterium ulcerans (strain Agy99).